The sequence spans 236 residues: MQKRELIYEGKGKKMYATDDPNLLVAEFKDDLTAFDAQKRGNEAGKGALNNKISTQLFKLLESKGIVTDLVETISDTEQVVKKCEIIPLEVVVRNIATGSLSKRLGIKEGTVLPFTLVEFYYKNDDLHDPLVTDEHCIIMGLVKSEKDLQTLRHTAREINSILFKFFAERNLKLVDFKVEFGIDKDGNIILADEISPDSCRFWDATTNEKLDKDRFRQDLGSVKVAYEEVLRRILS.

This sequence belongs to the SAICAR synthetase family.

The enzyme catalyses 5-amino-1-(5-phospho-D-ribosyl)imidazole-4-carboxylate + L-aspartate + ATP = (2S)-2-[5-amino-1-(5-phospho-beta-D-ribosyl)imidazole-4-carboxamido]succinate + ADP + phosphate + 2 H(+). It participates in purine metabolism; IMP biosynthesis via de novo pathway; 5-amino-1-(5-phospho-D-ribosyl)imidazole-4-carboxamide from 5-amino-1-(5-phospho-D-ribosyl)imidazole-4-carboxylate: step 1/2. In Campylobacter concisus (strain 13826), this protein is Phosphoribosylaminoimidazole-succinocarboxamide synthase.